Consider the following 785-residue polypeptide: Phosphoinositide phosphatase SAC5 (785 aa).

In terms of domain architecture, SAC spans 158–533 (LSVVDLSKNF…GNTLAMQYGG (376 aa)). Residues 469 to 480 (RTNCIDCLDRTN) carry the Phosphatase catalytic core motif. Residues 688-700 (GSGQMFQGSSSNS) are compositionally biased toward polar residues. Residues 688–707 (GSGQMFQGSSSNSDSHRPND) are disordered.

Component of the PI(3,5)P2 regulatory complex at least composed of ATG18, SAC/FIG4, FAB1 and VAC14. The cofactor is Mg(2+). Ubiquitous with a higher level of expression in young seedlings than in other tissues.

The protein resides in the vacuole membrane. It carries out the reaction a 1,2-diacyl-sn-glycero-3-phospho-(1D-myo-inositol-3,5-bisphosphate) + H2O = a 1,2-diacyl-sn-glycero-3-phospho-(1D-myo-inositol-3-phosphate) + phosphate. The PI(3,5)P2 regulatory complex regulates both the synthesis and turnover of phosphatidylinositol 3,5-bisphosphate (PtdIns(3,5)P2). This Arabidopsis thaliana (Mouse-ear cress) protein is Phosphoinositide phosphatase SAC5 (SAC5).